We begin with the raw amino-acid sequence, 592 residues long: Ichor (592 aa).

A compositionally biased stretch (polar residues) spans 114–123 (NNNYMQSAYH). Disordered stretches follow at residues 114-156 (NNNY…VSSS), 343-377 (LQNR…QAPT), 416-439 (LSNP…MQAS), and 459-527 (HTTT…DLSG). Positions 124-148 (PQNQSNPTSTTQSNGGSNSNSNNSN) are enriched in low complexity. A compositionally biased stretch (gly residues) spans 356 to 369 (SSGGGGGANQGAGI). Positions 459–469 (HTTTASTTGSE) are enriched in polar residues. Low complexity predominate over residues 488–500 (QQQQQQQQQQQQQ). Positions 507–524 (PTTPQMSAISPSGFSASD) are enriched in polar residues. 2 C2H2-type zinc fingers span residues 536-558 (HRCS…LRTH) and 564-586 (FRCD…QQIH).

The protein localises to the nucleus. Transcriptional activator. In tracheal terminal cells, regulates the transcription of factors involved in the formation of a mature apical extracellular matrix (aECM) which is essential for the integrity and shape of seamless tubes. This Drosophila melanogaster (Fruit fly) protein is Ichor.